Consider the following 734-residue polypeptide: Photosystem I P700 chlorophyll a apoprotein A2 (734 aa).

8 consecutive transmembrane segments (helical) span residues Ile46–Ala69, Leu135–Gln158, Leu175–Ile199, Ile273–Tyr291, Leu330–Tyr353, Ala369–Ile395, Ala417–His439, and Phe517–Val535. 2 residues coordinate [4Fe-4S] cluster: Cys559 and Cys568. 2 helical membrane passes run Ala575–Trp596 and Leu643–Ile665. Positions 654, 662, and 670 each coordinate chlorophyll a. Phylloquinone is bound at residue Trp671. A helical transmembrane segment spans residues Leu707–Ala727.

It belongs to the PsaA/PsaB family. In terms of assembly, the PsaA/B heterodimer binds the P700 chlorophyll special pair and subsequent electron acceptors. PSI consists of a core antenna complex that captures photons, and an electron transfer chain that converts photonic excitation into a charge separation. The eukaryotic PSI reaction center is composed of at least 11 subunits. P700 is a chlorophyll a/chlorophyll a' dimer, A0 is one or more chlorophyll a, A1 is one or both phylloquinones and FX is a shared 4Fe-4S iron-sulfur center. is required as a cofactor.

Its subcellular location is the plastid. The protein localises to the chloroplast thylakoid membrane. It catalyses the reaction reduced [plastocyanin] + hnu + oxidized [2Fe-2S]-[ferredoxin] = oxidized [plastocyanin] + reduced [2Fe-2S]-[ferredoxin]. Its function is as follows. PsaA and PsaB bind P700, the primary electron donor of photosystem I (PSI), as well as the electron acceptors A0, A1 and FX. PSI is a plastocyanin-ferredoxin oxidoreductase, converting photonic excitation into a charge separation, which transfers an electron from the donor P700 chlorophyll pair to the spectroscopically characterized acceptors A0, A1, FX, FA and FB in turn. Oxidized P700 is reduced on the lumenal side of the thylakoid membrane by plastocyanin. This Nicotiana tomentosiformis (Tobacco) protein is Photosystem I P700 chlorophyll a apoprotein A2.